Here is a 153-residue protein sequence, read N- to C-terminus: Cytochrome c-type biogenesis protein CcmE (153 aa).

Residues 1-8 lie on the Cytoplasmic side of the membrane; the sequence is MTTRRGRR. The chain crosses the membrane as a helical; Signal-anchor for type II membrane protein span at residues 9–29; that stretch reads ALLIAGGVGLLALAAALVLNA. Residues 30-153 lie on the Periplasmic side of the membrane; it reads LRSNLVFFFS…PSATLQTEAR (124 aa). Heme contacts are provided by H124 and Y128.

Belongs to the CcmE/CycJ family.

The protein resides in the cell inner membrane. Its function is as follows. Heme chaperone required for the biogenesis of c-type cytochromes. Transiently binds heme delivered by CcmC and transfers the heme to apo-cytochromes in a process facilitated by CcmF and CcmH. This Bordetella parapertussis (strain 12822 / ATCC BAA-587 / NCTC 13253) protein is Cytochrome c-type biogenesis protein CcmE.